The chain runs to 171 residues: Auxin-responsive protein IAA33 (171 aa).

Polar residues-rich tracts occupy residues 1–11 (MNSFEPQSQDS) and 19–32 (DNST…TTTP). Residues 1 to 51 (MNSFEPQSQDSLQRRFHQDNSTTQQPRDTTTPFIPKPASKNHNNSNSSSGA) are disordered. The segment covering 40–49 (KNHNNSNSSS) has biased composition (low complexity). A PB1 domain is found at 72–162 (VPPVTVVLEG…KRIRILPVKG (91 aa)).

It belongs to the Aux/IAA family. In terms of assembly, homodimers and heterodimers.

It localises to the nucleus. Its function is as follows. Aux/IAA proteins are short-lived transcriptional factors that function as repressors of early auxin response genes at low auxin concentrations. Repression is thought to result from the interaction with auxin response factors (ARFs), proteins that bind to the auxin-responsive promoter element (AuxRE). Formation of heterodimers with ARF proteins may alter their ability to modulate early auxin response genes expression. This is Auxin-responsive protein IAA33 (IAA33) from Arabidopsis thaliana (Mouse-ear cress).